The primary structure comprises 163 residues: MSEFYKLAPVDKKGQPFPFDQLKGKVVLIVNVASKCGFTPQYKELEALYKRYKDEGFTIIGFPCNQFGHQEPGSDEEIAQFCQLNYGVTFPIMKKIDVNGGNEDPVYKFLKSQKSGMLGLRGIKWNFEKFLVDKKGKVYERYSSLTKPSSLSETIEELLKEVE.

C36 acts as the Cysteine sulfenic acid (-SOH) intermediate in catalysis. C36 and C82 are joined by a disulfide.

It belongs to the glutathione peroxidase family. As to quaternary structure, interacts with YAP1 and probably YBP1.

It localises to the cytoplasm. It is found in the mitochondrion intermembrane space. The protein localises to the peroxisome matrix. It carries out the reaction a hydroperoxide + [thioredoxin]-dithiol = an alcohol + [thioredoxin]-disulfide + H2O. Functionally, involved in oxidative stress response and redox homeostasis. Functions as a sensor and transducer of hydroperoxide stress. In response to hydroperoxide stress it oxidizes (activates) the transcription activator YAP1, which is involved in transcription activation of genes of the oxidative stress response pathway. May also play a direct role in hydroperoxide scavenging, being the most active of three closely related S.cerevisiae peroxiredoxins (GPX1, GPX2, and HYR1/GPX3) with respect to peroxide and lipid hydroperoxide reduction. The three enzymes are not required for the glutaredoxin-mediated antioxidant function. In the presence of peroxides, HYR1/GPX3 is directly oxidized at Cys-36 to form a cysteine sulfenic acid (-SOH). Cys-36-SOH then forms either an intramolecular disulfide bond (Cys-36 with Cys-82) or a transient, intermolecular disulfide bond with 'Cys-598' of YAP1, which is further resolved into a YAP1 intramolecular disulfide bond ('Cys-303' with 'Cys-598'), which causes its nuclear accumulation and activation, and a reduced Cys-36 in HYR1/GPX3. The protein is Glutathione peroxidase-like peroxiredoxin HYR1 of Saccharomyces cerevisiae (strain ATCC 204508 / S288c) (Baker's yeast).